A 30-amino-acid polypeptide reads, in one-letter code: Acidic phospholipase A2 homolog cannitoxin gamma chain (30 aa).

As to quaternary structure, heterotrimer of alpha, beta, and gamma chains; non-covalently linked. In terms of processing, glycosylated. Expressed by the venom gland.

It is found in the secreted. Functionally, heterotrimer: Snake venom phospholipase A2 (PLA2) heterotrimer that acts as a potent presynaptic neurotoxin by blocking synaptic transmission and synaptic vesicle recycling. Enzymatic activity is essential for the neurotoxic effects. May act by binding in a calcium-dependent fashion to neurotonal pentraxin-1 (NPTX1) and neurotonal pentraxin-2 (NPTX2), but not to neuronal pentraxin receptor (NPTXR). Also binds to taipoxin-associated calcium binding protein 49 (RCN2), a protein localized in the lumen of endoplasmic reticulum. Its function is as follows. Monomer (gamma chain): Snake venom phospholipase A2 homolog that is neither toxic nor enzymatically active. Does not bind calcium. The sequence is that of Acidic phospholipase A2 homolog cannitoxin gamma chain from Oxyuranus scutellatus canni (Papuan taipan).